Consider the following 89-residue polypeptide: Small ribosomal subunit protein uS15 (89 aa).

This sequence belongs to the universal ribosomal protein uS15 family. In terms of assembly, part of the 30S ribosomal subunit. Forms a bridge to the 50S subunit in the 70S ribosome, contacting the 23S rRNA.

Its function is as follows. One of the primary rRNA binding proteins, it binds directly to 16S rRNA where it helps nucleate assembly of the platform of the 30S subunit by binding and bridging several RNA helices of the 16S rRNA. Forms an intersubunit bridge (bridge B4) with the 23S rRNA of the 50S subunit in the ribosome. The protein is Small ribosomal subunit protein uS15 of Methylorubrum extorquens (strain CM4 / NCIMB 13688) (Methylobacterium extorquens).